The chain runs to 137 residues: 2-iminobutanoate/2-iminopropanoate deaminase (137 aa).

The residue at position 2 (S2) is an N-acetylserine. 2 positions are modified to N6-succinyllysine: K13 and K67. T74 is modified (phosphothreonine). A Phosphoserine modification is found at S136.

In terms of assembly, homotrimer. Interacts with YTHDF2. In terms of tissue distribution, expressed by various malignant neoplasms.

It localises to the cytoplasm. Its subcellular location is the nucleus. The protein localises to the peroxisome. The protein resides in the mitochondrion. The enzyme catalyses 2-iminobutanoate + H2O = 2-oxobutanoate + NH4(+). It catalyses the reaction 2-iminopropanoate + H2O = pyruvate + NH4(+). In terms of biological role, catalyzes the hydrolytic deamination of enamine/imine intermediates that form during the course of normal metabolism. May facilitate the release of ammonia from these potentially toxic reactive metabolites, reducing their impact on cellular components. It may act on enamine/imine intermediates formed by several types of pyridoxal-5'-phosphate-dependent dehydratases including L-threonine dehydratase. Functionally, also promotes endoribonucleolytic cleavage of some transcripts by promoting recruitment of the ribonuclease P/MRP complex. Acts by bridging YTHDF2 and the ribonuclease P/MRP complex. RIDA/HRSP12 binds to N6-methyladenosine (m6A)-containing mRNAs containing a 5'-GGUUC-3' motif: cooperative binding of RIDA/HRSP12 and YTHDF2 to such transcripts lead to recruitment of the ribonuclease P/MRP complex and subsequent endoribonucleolytic cleavage. In Capra hircus (Goat), this protein is 2-iminobutanoate/2-iminopropanoate deaminase.